The primary structure comprises 388 residues: tRNA (guanine-N(7)-)-methyltransferase non-catalytic subunit (388 aa).

4 WD repeats span residues 58–102, 112–151, 153–194, and 196–234; these read VEKR…KGDI, VVPKAPTAIVFDKEDAYVVVGDRAGDVHRFSVLNGSAIEM, GAIS…DSFF, and GHTEYVKTLAVQDNDSLWSSGGDKNLYNWSIAKCSAPRR. The tract at residues 365 to 388 is disordered; the sequence is EKKKRRLNEDINGDDGEGPGPSNS.

Belongs to the WD repeat TRM82 family. In terms of assembly, forms a heterodimer with the catalytic subunit.

It is found in the nucleus. It participates in tRNA modification; N(7)-methylguanine-tRNA biosynthesis. Required for the formation of N(7)-methylguanine at position 46 (m7G46) in tRNA. In the complex, it is required to stabilize and induce conformational changes of the catalytic subunit. This is tRNA (guanine-N(7)-)-methyltransferase non-catalytic subunit from Caenorhabditis elegans.